A 386-amino-acid chain; its full sequence is Cytochrome b (386 aa).

4 consecutive transmembrane segments (helical) span residues 32 to 52 (LGSL…FLAM), 76 to 98 (YLIR…AHIG), 113 to 133 (VWVI…LGYC), and 179 to 199 (FFAL…MHLM). 2 residues coordinate heme b: His82 and His96. His183 and His197 together coordinate heme b. His202 serves as a coordination point for a ubiquinone. A run of 4 helical transmembrane segments spans residues 225–245 (FVFK…LFVF), 289–309 (LGGV…PVTD), 321–341 (ISKT…QLGQ), and 348–368 (FIQL…FIVP).

This sequence belongs to the cytochrome b family. In terms of assembly, fungal cytochrome b-c1 complex contains 10 subunits; 3 respiratory subunits, 2 core proteins and 5 low-molecular weight proteins. Cytochrome b-c1 complex is a homodimer. Requires heme b as cofactor.

The protein resides in the mitochondrion inner membrane. In terms of biological role, component of the ubiquinol-cytochrome c reductase complex (complex III or cytochrome b-c1 complex) that is part of the mitochondrial respiratory chain. The b-c1 complex mediates electron transfer from ubiquinol to cytochrome c. Contributes to the generation of a proton gradient across the mitochondrial membrane that is then used for ATP synthesis. The chain is Cytochrome b (COB) from Wickerhamomyces canadensis (Yeast).